A 418-amino-acid polypeptide reads, in one-letter code: Creatine kinase U-type, mitochondrial (418 aa).

Residues M1–A39 constitute a mitochondrion transit peptide. Positions A40–M64 are cardiolipin-binding. Residues R46–N132 enclose the Phosphagen kinase N-terminal domain. Position 152 is a phosphoserine (S152). The 243-residue stretch at Y159–L401 folds into the Phosphagen kinase C-terminal domain. An ATP-binding site is contributed by S162 to R166. The residue at position 197 (S197) is a Phosphoserine. T214 carries the phosphothreonine modification. H225 provides a ligand contact to ATP. Residue S233 is modified to Phosphoserine. ATP is bound by residues R270, R326, R354–V359, and D369. T356 bears the Phosphothreonine mark.

Belongs to the ATP:guanido phosphotransferase family. Exists as an octamer composed of four MTCK homodimers. In many tissues, with highest levels in brain gut and kidney. In the kidney localized primarily in the outer medulla in the thick ascending limb and distal convoluted tubule.

Its subcellular location is the mitochondrion inner membrane. It catalyses the reaction creatine + ATP = N-phosphocreatine + ADP + H(+). In terms of biological role, reversibly catalyzes the transfer of phosphate between ATP and various phosphogens (e.g. creatine phosphate). Creatine kinase isoenzymes play a central role in energy transduction in tissues with large, fluctuating energy demands, such as skeletal muscle, heart, brain and spermatozoa. In Rattus norvegicus (Rat), this protein is Creatine kinase U-type, mitochondrial (Ckmt1).